Here is a 113-residue protein sequence, read N- to C-terminus: Hydrogenase maturation factor HypA (113 aa).

H2 serves as a coordination point for Ni(2+). 4 residues coordinate Zn(2+): C73, C76, C89, and C92.

The protein belongs to the HypA/HybF family.

Its function is as follows. Involved in the maturation of [NiFe] hydrogenases. Required for nickel insertion into the metal center of the hydrogenase. The protein is Hydrogenase maturation factor HypA of Chlorobaculum parvum (strain DSM 263 / NCIMB 8327) (Chlorobium vibrioforme subsp. thiosulfatophilum).